We begin with the raw amino-acid sequence, 79 residues long: Cyclin-dependent kinases regulatory subunit 1 (79 aa).

Ser-2 is modified (N-acetylserine).

Belongs to the CKS family. Forms a homohexamer that can probably bind six kinase subunits.

Its function is as follows. Binds to the catalytic subunit of the cyclin dependent kinases and is essential for their biological function. The chain is Cyclin-dependent kinases regulatory subunit 1 (CKS1B) from Bos taurus (Bovine).